The sequence spans 199 residues: Chaperone protein TorD (199 aa).

It belongs to the TorD/DmsD family. TorD subfamily.

The protein localises to the cytoplasm. Functionally, involved in the biogenesis of TorA. Acts on TorA before the insertion of the molybdenum cofactor and, as a result, probably favors a conformation of the apoenzyme that is competent for acquiring the cofactor. The protein is Chaperone protein TorD of Actinobacillus pleuropneumoniae serotype 3 (strain JL03).